The primary structure comprises 3066 residues: MATIMIGSMAISVPNTHVSCASNSVMPVQAVQMAKQVPSARGVLYTLKREGSTQVHKHEEALRKFQEAFDQDVGIQRRLLVNKHSSIQSTKKNGLTLRRLTLEQARAKEAAIARRKQEEEDFLNGKYEQQFYAGVSATKSMKFEGGSVGFRTKYWRPTPKKTKERRATSQCRKPTYVLEEVLSIASKSGKLVEFITGKGKRVKVCYVRKHGAILPKFSLPHEEGKYIHQELQYASTYEFLPYICMFAKYKSINADDITYGDSGLLFDERSSLTTNHTKLPYFVVRGRRNGKLVNALEVVENMEDIQHYSQNPEAQFFRGWKKVFDKMPPHVENHECTTDFTNEQCGELAAAISQSIFPVKKLSCKQCRQHIKHLSWEEYKQFLLAHMGCHGPEWETFQEIDGMRYVKRVIETSTAENASLQTSLEIVRLTQNYKSTHMLQIQDINKALMKGPSVTQSELEQASKQLLAMTQWWKNHMTLTDEDALKVFRNKRSSKALLNPSLLCDNQLDKNGNFVWGERGRHSKRFFANYFEEVVPSEGYSKYVIRKNPNGQRELAIGSLIVPLDFERARMALQGKSVTREPITMSCISRQDGNFVYPCCCVTHDDGKAFYSELRSPTKRHLVIGTSGDPKYIDLPATDADRMYIAKEGFCYLNIFLAMLVNVNEDEAKDFTKMVRDVIVPRLGKWPTMLDVATAAYMLTVFHPETRNAELPRILVDHACQTMHVIDSFGSLTVGYHVLKAGTVNQLIQFASNDLQSEMKFYRVGGEVQQRMKCETALITSIFKPKRMIQILENDPYILLMGLVSPSILIHMYRMKHFEKGVELWISKEHSVAKIFIILEQLTKRVAANDVLLEQLEMISETSERFMSILEDCPQAPHSYKTAKDLLTMYIERKASNNQLVENGFVDMNDKLYMAYEKIYSDRLKQEWRALSWLEKFSITWQLKRFAPHTEKCLTKKVVEESSASSGNFASVCFMNAQSHLRNVRNTLFQKCDQVWTASVRAFVKLIISTLHRCYSDIVYLVNICIIFSLLVQMTSVLQGIVNTVRRDKALLSGWKRKEDEEAVIHLYEMCEKMEGGHPSIEKFLDHVKGVRPDLLPVAVSMTGQSEDVSAQAKTATQLQLEKIVAFMALLTMCIDNERSDAVFKVLSKLKAFFSTMGEDVKVQSLDEIQSIDEDKKLTIDFDLETNKESSSVSFDVKFEAWWNRQLEQNRVIPHYRSTGEFLEFTRETAAKIANLVATSSHTEFLIRGAVGSGKSTGLPHHLSKKGKVLLLEPTRPLAENVSKQLSFEPFYHNVTLRMRGMSKFGSSNIVVMTSGFAFHYYVNNPQQLSDFDFIIIDECHVQDSPTIAFNCALKEFEFSGKLIKVSATPPGRECEFTTQHPVKLKVEDHLSFQNFVQAQGTGSNADMIQHGNNLLVYVASYNEVDQLSRLLTEKHYKVTKVDGRTMQMGNVEIATTGTEGKPHFIVATNIIENGVTLDIDCVIDFGLKVVATLDTDNRCVRYNKQSVSYGERIQRLGRVGRCKPGFALRIGHTGKGVEEVPEFIATEAAFLSFAYGLPVTTQSVSTNILSRCTVKQARVALNFELTPFFTTNFIKYDGSMHPEIHRLLKSYKLRESEMLLTKIAIPYQFVGQWVTVKEYERQGIHLNCPEKVKIPFYVHGIPDKLYEMLWDTVCKYKNDAGFGSVKSVNATKISYTLSTDPTAIPRTLAILDHLLSEEMTKKSHFDTIGSAVTGYSFSLAGIADGFRKRYLKDYTQHNIAVLQQAKAQLLEFDCNKVDINNLHNVEGIGILNAVQLQSKHEVSKFLQLKGKWDGKKFMNDAVVAIFTLVGGGWMLWDYFTRVIREPVSTQGKKRQIQKLKFRDAFDRKIGREVYADDYTMEHTFGEAYTKKGKQKGSTRTKGMGRKSRNFIHLYGVEPENYSMIRFVDPLTGHTMDEHPRVDIRMVQQEFEEIRKDMIGEGELDRQRVYHNPGLQAYFIGKNTEEALKVDLTPHRPTLLCQNSNAIAGFPEREDELRQTGLPQVVSKSDVPRAKERVEMESKSVYKGLRDYSGISTLICQLTNSSDGHKETMFGVGYGSFIITNGHLFRRNNGMLTVKTWHGEFVIHNTTQLKIHFIQGKDVILIRMPKDFPPFGKRNLFRQPKREERVCMVGTNFQEKSLRATVSESSMILPEGKGSFWIHWITTQDGFCGLPLVSVNDGHIVGIHGLTSNDSEKNFFVPLTDGFEKEYLENADNLSWDKHWFWEPSKIAWGSLNLVEEQPKEEFKISKLVSDLFGNTVTVQGRKERWVLDAMEGNLAACGQADSALVTKHVVKGKCPYFAQYLSVNQEAKSFFEPLMGAYQPSRLNKDAFKRDFFKYNKPVVLNEVDFQSFERAVAGVKLMMMEFDFKECVYVTDPDEIYDSLNMKAAVGAQYKGKKQDYFSGMDSFDKERLLYLSCERLFYGEKGVWNGSLKAELRPIEKVQANKTRTFTAAPIDTLLGAKVCVDDFNNQFYSLNLTCPWTVGMTKFYRGWDKLMRSLPDGWVYCHADGSQFDSSLTPLLLNAVLDVRSFFMEDWWVGREMLENLYAEIVYTPILAPDGTIFKKFRGNNSGQPSTVVDNTLMVVIAMYYSCCKQGWSEEDIQERLVFFANGDDIILAVSDKDTWLYDTLSTSFAELGLNYNFEERTKKREELWFMSHKAVLVDGIYIPKLEPERIVSILEWDRSKELMHRTEAICASMIEAWGYTELLQEIRKFYLWLLNKDEFKELASSGKAPYIAETALRKLYTDVNAQTSELQRYLEVLDFNHADDCCESVSLQSGKEKEGDMDADKDPKKSTSSSKGAGTSSKDVNVGSKGKVVPRLQKITRKMNLPMVEGKIILSLDHLLEYKPNQVDLFNTRATRTQFEAWYNAVKDEYELDDEQMGVVMNGFMVWCIDNGTSPDANGVWVMMDGEEQIEYPLKPIVENAKPTLRQIMHHFSDAAEAYIEMRNSESPYMPRYGLLRNLRDRELARYAFDFYEVTSKTPNRAREAIAQMKAAALSGVNNKLFGLDGNISTNSENTERHTARDVNQNMHTLLGMGPPQ.

The Peptidase S30 domain occupies 168–308; it reads TSQCRKPTYV…VENMEDIQHY (141 aa). Catalysis depends on for P1 proteinase activity residues H221, E230, and S262. Residues 361-364 carry the Involved in interaction with stylet and aphid transmission motif; sequence KLSC. The Involved in virions binding and aphid transmission signature appears at 617 to 619; that stretch reads PTK. The region spanning 643-765 is the Peptidase C6 domain; sequence MYIAKEGFCY…QSEMKFYRVG (123 aa). Residues C651 and H724 each act as for helper component proteinase activity in the active site. The 153-residue stretch at 1236–1388 folds into the Helicase ATP-binding domain; that stretch reads LVATSSHTEF…TQHPVKLKVE (153 aa). 1249-1256 is an ATP binding site; that stretch reads GAVGSGKS. A DECH box motif is present at residues 1338 to 1341; that stretch reads DECH. In terms of domain architecture, Helicase C-terminal spans 1407–1566; the sequence is DMIQHGNNLL…GLPVTTQSVS (160 aa). Positions 1891 to 1900 match the Nuclear localization signal motif; sequence KKGKQKGSTR. The residue at position 1915 (Y1915) is an O-(5'-phospho-RNA)-tyrosine. The Peptidase C4 domain occupies 2042–2260; the sequence is SKSVYKGLRD…IAWGSLNLVE (219 aa). Residues H2087, D2122, and C2192 each act as for nuclear inclusion protein A activity in the active site. In terms of domain architecture, RdRp catalytic spans 2526 to 2650; sequence WVYCHADGSQ…AVSDKDTWLY (125 aa). Positions 2799–2836 are disordered; the sequence is SLQSGKEKEGDMDADKDPKKSTSSSKGAGTSSKDVNVG. Positions 2803–2818 are enriched in basic and acidic residues; sequence GKEKEGDMDADKDPKK. Low complexity predominate over residues 2819-2831; it reads STSSSKGAGTSSK. T3048 is modified (phosphothreonine).

The protein belongs to the potyviridae genome polyprotein family. As to quaternary structure, interacts with host eIF4E protein (via cap-binding region); this interaction mediates the translation of the VPg-viral RNA conjugates. Part of a complex that comprises VPg, RNA, host EIF4E and EIF4G; this interaction mediates the translation of the VPg-viral RNA conjugates. In terms of assembly, interacts with host eIF4E proteins in the host cytoplasm. VPg is uridylylated by the polymerase and is covalently attached to the 5'-end of the genomic RNA. This uridylylated form acts as a nucleotide-peptide primer for the polymerase. In terms of processing, potyviral RNA is expressed as two polyproteins which undergo post-translational proteolytic processing. Genome polyprotein is processed by NIa-pro, P1 and HC-pro proteinases resulting in the production of at least ten individual proteins. P3N-PIPO polyprotein is cleaved by P1 and HC-pro proteinases resulting in the production of three individual proteins. The P1 proteinase and the HC-pro cleave only their respective C-termini autocatalytically. 6K1 is essential for proper proteolytic separation of P3 from CI.

It is found in the host cytoplasmic vesicle. The protein localises to the host cytoplasm. It localises to the host nucleus. The protein resides in the virion. The catalysed reaction is RNA(n) + a ribonucleoside 5'-triphosphate = RNA(n+1) + diphosphate. It catalyses the reaction Hydrolyzes glutaminyl bonds, and activity is further restricted by preferences for the amino acids in P6 - P1' that vary with the species of potyvirus, e.g. Glu-Xaa-Xaa-Tyr-Xaa-Gln-|-(Ser or Gly) for the enzyme from tobacco etch virus. The natural substrate is the viral polyprotein, but other proteins and oligopeptides containing the appropriate consensus sequence are also cleaved.. It carries out the reaction Hydrolyzes a Gly-|-Gly bond at its own C-terminus, commonly in the sequence -Tyr-Xaa-Val-Gly-|-Gly, in the processing of the potyviral polyprotein.. Functionally, required for aphid transmission and also has proteolytic activity. Only cleaves a Gly-Gly dipeptide at its own C-terminus. Interacts with virions and aphid stylets. Acts as a suppressor of RNA-mediated gene silencing, also known as post-transcriptional gene silencing (PTGS), a mechanism of plant viral defense that limits the accumulation of viral RNAs. May have RNA-binding activity. Has helicase activity. It may be involved in replication. In terms of biological role, indispensable for virus replication. Reduces the abundance of host transcripts related to jasmonic acid biosynthesis therefore altering the host defenses. In order to increase its own stability, decreases host protein degradation pathways. Its function is as follows. Indispensable for virus replication. Functionally, mediates the cap-independent, EIF4E-dependent translation of viral genomic RNAs. Binds to the cap-binding site of host EIF4E and thus interferes with the host EIF4E-dependent mRNA export and translation. VPg-RNA directly binds EIF4E and is a template for transcription. Also forms trimeric complexes with EIF4E-EIF4G, which are templates for translation. Has RNA-binding and proteolytic activities. In terms of biological role, an RNA-dependent RNA polymerase that plays an essential role in the virus replication. Its function is as follows. Involved in aphid transmission, cell-to-cell and systemis movement, encapsidation of the viral RNA and in the regulation of viral RNA amplification. The polypeptide is Genome polyprotein (Glycine max (Soybean)).